A 193-amino-acid polypeptide reads, in one-letter code: 7-methyl-GTP pyrophosphatase (193 aa).

The active-site Proton acceptor is the Asp-70.

The protein belongs to the Maf family. YceF subfamily. A divalent metal cation serves as cofactor.

Its subcellular location is the cytoplasm. It catalyses the reaction N(7)-methyl-GTP + H2O = N(7)-methyl-GMP + diphosphate + H(+). Its function is as follows. Nucleoside triphosphate pyrophosphatase that hydrolyzes 7-methyl-GTP (m(7)GTP). May have a dual role in cell division arrest and in preventing the incorporation of modified nucleotides into cellular nucleic acids. This chain is 7-methyl-GTP pyrophosphatase, found in Vibrio parahaemolyticus serotype O3:K6 (strain RIMD 2210633).